The primary structure comprises 291 residues: Asialoglycoprotein receptor 1 (291 aa).

A compositionally biased stretch (basic and acidic residues) spans methionine 1–histidine 19. Residues methionine 1 to proline 27 form a disordered region. The Cytoplasmic portion of the chain corresponds to methionine 1 to arginine 40. The short motif at cysteine 5–leucine 8 is the Endocytosis signal element. A Phosphoserine modification is found at serine 16. Cysteine 36 carries S-palmitoyl cysteine lipidation. The chain crosses the membrane as a helical; Signal-anchor for type II membrane protein span at residues leucine 41–serine 61. Positions serine 61–leucine 123 form a coiled coil. Topologically, residues glutamine 62 to leucine 291 are extracellular. N-linked (GlcNAc...) asparagine glycans are attached at residues asparagine 79 and asparagine 147. Intrachain disulfides connect cysteine 154–cysteine 165, cysteine 182–cysteine 277, and cysteine 255–cysteine 269. The C-type lectin domain occupies histidine 161–glutamate 278. The Ca(2+) site is built by valine 191, glutamate 197, aspartate 216, glutamine 240, aspartate 242, aspartate 243, glutamate 253, aspartate 254, asparagine 265, aspartate 266, and glutamate 278. At serine 285 the chain carries Phosphoserine.

As to quaternary structure, interacts with LASS2. Phosphorylated on a cytoplasmic Ser residue.

It localises to the membrane. Functionally, mediates the endocytosis of plasma glycoproteins to which the terminal sialic acid residue on their complex carbohydrate moieties has been removed. The receptor recognizes terminal galactose and N-acetylgalactosamine units. After ligand binding to the receptor, the resulting complex is internalized and transported to a sorting organelle, where receptor and ligand are disassociated. The receptor then returns to the cell membrane surface. The chain is Asialoglycoprotein receptor 1 (ASGR1) from Pongo abelii (Sumatran orangutan).